The primary structure comprises 588 residues: Arginine--tRNA ligase (588 aa).

The 'HIGH' region motif lies at 129 to 139 (PNIAKEMHVGH).

It belongs to the class-I aminoacyl-tRNA synthetase family. As to quaternary structure, monomer.

Its subcellular location is the cytoplasm. It carries out the reaction tRNA(Arg) + L-arginine + ATP = L-arginyl-tRNA(Arg) + AMP + diphosphate. The chain is Arginine--tRNA ligase from Frankia casuarinae (strain DSM 45818 / CECT 9043 / HFP020203 / CcI3).